The sequence spans 1446 residues: Toll-like receptor 7 (1446 aa).

Positions 1–16 are cleaved as a signal peptide; the sequence is MAAILLLLLGFSWSLA. Topologically, residues 17–1049 are extracellular; sequence VESALAPKES…QHGIPESYIP (1033 aa). 23 LRR repeats span residues 133-156, 158-180, 188-211, 213-235, 246-270, 271-294, 295-318, 320-342, 344-368, 369-392, 393-416, 417-440, 442-464, 465-488, 489-511, 513-535, 536-559, 561-582, 584-605, 606-629, 631-652, 653-675, and 677-699; these read LQTLEALRLDSCKLLQLPNNAFEG, ATLKSLRLSTHNSEWGPTRTLEL, LKQLTDLDLGDNNLRQLPSGFLCP, GNLQVLNLTRNRIRTAEQMGFAD, GSELQVLDASHNELRSISESWGISR, LRRLQHLNLAYNNLSELSGEALAG, LASLRIVNLSNNHLETLPEGLFAG, KELREIHLQQNELYELPKGLFHR, EQLLVVDLSGNQLTSNHVDNTTFAG, LIRLIVLNLAHNALTRIDYRTFKE, LYFLQILNLRNNSIGHIEDNAFLP, LYNLHTLNLAENRLHTLDDKLFNG, YVLSKLTLNNNLISVVEPAVFKN, CSDLKELDLSSNQLNEVPRALQDL, AMLRTLDLGENQIRTFDNQSFKN, HQLTGLRLIDNQIGNITVGMFQD, LPRLSVLNLAKNRIQSIERGSFDK, FELEAIRLDRNFLADINGVFAT, VSLLWLNLSENHLVWFDYAFIP, SNLKWLDIHGNYIEALGNYYKLQE, IRVKTLDASHNRITEIGPMSIP, NTIELLFINNNLIGNVQPNAFVD, and ANLARVDLYANQLSKLQLQQLRV. One can recognise an LRRCT domain in the interval 716-773; sequence NPFECDCTMDWLQRINNLTTRQHPRVMDMANIECVMPHARGAAVRPLSGLRPQDFLCR. Disulfide bonds link C722/C772, C796/C802, and C800/C815. LRR repeat units follow at residues 828–851, 852–875, 876–899, 900–923, 925–947, and 951–979; these read PMDSSVVYLDGNNFPVLKNHAFIG, RKNLRALYVNGSQVAAIQNRTFAS, LASLQLLHLADNKLRTLHGYEFEQ, LSALRELYLQNNQLTTIENATLAP, AALELIRIDGNRLVTLPIWQMHA, and GTRLKSISLGRNQWSCRCQFLQALTSYVA. Cysteines 966 and 993 form a disulfide. The helical transmembrane segment at 1050 to 1070 threads the bilayer; the sequence is LLAAALALLFLLVVIAMVFAF. The Cytoplasmic portion of the chain corresponds to 1071–1446; the sequence is RESLRIWLFA…QGPHVQAYLV (376 aa). A TIR domain is found at 1096 to 1233; the sequence is KLYDAVLLHS…HFWEKLRYAL (138 aa). Disordered stretches follow at residues 1301 to 1332 and 1388 to 1446; these read QNYSTATTATPSPRPQRRGEQPGSGSGGNHHL and RPKR…AYLV. Residues 1395–1413 show a composition bias toward polar residues; that stretch reads HLQQAQAGTLGSKASQAAH. The segment covering 1414–1426 has biased composition (low complexity); sequence QQQQQQQQQQQQQ. A compositionally biased stretch (polar residues) spans 1427–1439; sequence PNPTAVSGQQQGP.

The protein belongs to the Toll-like receptor family. Expressed in the fan-shaped body and the ellipsoid body, which are components of the locomotion center in the CNS (at protein level).

It localises to the cell membrane. Toll-related receptor which binds to the neurotrophins NT1 and spz5. Essential for antiviral autophagy, it detects and binds to the vesicular stomatitis virus (vsv) following infection. This role is likely to be independent of the canonical Toll, immune deficiency, and JAK-STAT signaling pathways. Functions in olfactory circuit assembly by promoting synaptic partner matching between olfactory receptor neurons (ORN) axons and projection neurons (PN) dendrites partners in the antennal lobe. Function in the Va1d ORNs is necessary and sufficient for correct targeting to their partner PN dendrites. Also involved in the targeting of other classes of ORN axons. Functions with Toll-6 to regulate motor axon targeting and neuronal survival in the central nervous system (CNS). May be an upstream component of the NF-kappa-B (rel) regulatory cascade. This Drosophila melanogaster (Fruit fly) protein is Toll-like receptor 7.